The following is a 314-amino-acid chain: Homoserine O-succinyltransferase (314 aa).

Catalysis depends on cysteine 142, which acts as the Acyl-thioester intermediate. The substrate site is built by lysine 163 and serine 192. The active-site Proton acceptor is the histidine 235. The active site involves glutamate 237. Arginine 249 is a substrate binding site.

It belongs to the MetA family.

The protein localises to the cytoplasm. It catalyses the reaction L-homoserine + succinyl-CoA = O-succinyl-L-homoserine + CoA. It participates in amino-acid biosynthesis; L-methionine biosynthesis via de novo pathway; O-succinyl-L-homoserine from L-homoserine: step 1/1. In terms of biological role, transfers a succinyl group from succinyl-CoA to L-homoserine, forming succinyl-L-homoserine. The polypeptide is Homoserine O-succinyltransferase (Shewanella pealeana (strain ATCC 700345 / ANG-SQ1)).